The sequence spans 469 residues: UDP-N-acetylmuramoylalanine--D-glutamate ligase (469 aa).

Residue 121-127 participates in ATP binding; the sequence is GTNGKST.

This sequence belongs to the MurCDEF family.

It localises to the cytoplasm. It carries out the reaction UDP-N-acetyl-alpha-D-muramoyl-L-alanine + D-glutamate + ATP = UDP-N-acetyl-alpha-D-muramoyl-L-alanyl-D-glutamate + ADP + phosphate + H(+). It functions in the pathway cell wall biogenesis; peptidoglycan biosynthesis. Functionally, cell wall formation. Catalyzes the addition of glutamate to the nucleotide precursor UDP-N-acetylmuramoyl-L-alanine (UMA). This Rhodopseudomonas palustris (strain ATCC BAA-98 / CGA009) protein is UDP-N-acetylmuramoylalanine--D-glutamate ligase.